Here is a 157-residue protein sequence, read N- to C-terminus: Ribosomal RNA large subunit methyltransferase H (157 aa).

S-adenosyl-L-methionine-binding positions include Leu73, Gly105, and Met124 to Phe129.

It belongs to the RNA methyltransferase RlmH family. Homodimer.

The protein resides in the cytoplasm. The catalysed reaction is pseudouridine(1915) in 23S rRNA + S-adenosyl-L-methionine = N(3)-methylpseudouridine(1915) in 23S rRNA + S-adenosyl-L-homocysteine + H(+). Specifically methylates the pseudouridine at position 1915 (m3Psi1915) in 23S rRNA. This chain is Ribosomal RNA large subunit methyltransferase H, found in Bacteroides fragilis (strain ATCC 25285 / DSM 2151 / CCUG 4856 / JCM 11019 / LMG 10263 / NCTC 9343 / Onslow / VPI 2553 / EN-2).